The primary structure comprises 131 residues: Large-conductance mechanosensitive channel (131 aa).

2 helical membrane passes run 21–41 (VGVI…ADVI) and 76–96 (GMFI…FLMI).

This sequence belongs to the MscL family. In terms of assembly, homopentamer.

The protein localises to the cell inner membrane. Its function is as follows. Channel that opens in response to stretch forces in the membrane lipid bilayer. May participate in the regulation of osmotic pressure changes within the cell. The protein is Large-conductance mechanosensitive channel of Histophilus somni (strain 129Pt) (Haemophilus somnus).